Reading from the N-terminus, the 224-residue chain is Putative cytochrome c-type biogenesis protein DbsD-like (224 aa).

5 helical membrane passes run 32-52, 74-94, 104-124, 150-170, and 176-196; these read FIFLSGLFTSLSPCIISILPV, FLFCLGTISSFITLGILATLI, GIPTISAVVIIYMGLNLLNIV, GIGIAISSCSTPIFVTLLVWI, and IFTGLIFILIYSIGYIFPIII.

This sequence belongs to the DsbD family.

The protein localises to the plastid. The protein resides in the chloroplast membrane. Its function is as follows. Could be involved in cytochrome c synthesis. This chain is Putative cytochrome c-type biogenesis protein DbsD-like, found in Pyropia yezoensis (Susabi-nori).